The chain runs to 633 residues: Lysophospholipase 1 (633 aa).

The N-terminal stretch at 1–20 is a signal peptide; it reads MKTTTVACAVAGLLFSCVSG. In terms of domain architecture, PLA2c spans 47–594; that stretch reads GCPASRPTIR…QRYCWDGSLN (548 aa). 18 N-linked (GlcNAc...) asparagine glycosylation sites follow: asparagine 64, asparagine 104, asparagine 139, asparagine 173, asparagine 246, asparagine 290, asparagine 329, asparagine 358, asparagine 397, asparagine 450, asparagine 463, asparagine 469, asparagine 497, asparagine 500, asparagine 521, asparagine 549, asparagine 555, and asparagine 594. A lipid anchor (GPI-like-anchor amidated serine) is attached at serine 609. The propeptide at 610-633 is removed in mature form; it reads AASGIIPSISTVAMAVVFAAWTIF.

Belongs to the lysophospholipase family. Post-translationally, the GPI-like anchor contains a phosphoceramide lipid group. The anchor position has not been determined.

Its subcellular location is the cell membrane. It carries out the reaction a 1-acyl-sn-glycero-3-phosphocholine + H2O = sn-glycerol 3-phosphocholine + a fatty acid + H(+). Catalyzes the release of fatty acids from lysophospholipids. In Aspergillus fumigatus (strain CBS 144.89 / FGSC A1163 / CEA10) (Neosartorya fumigata), this protein is Lysophospholipase 1 (plb1).